The primary structure comprises 486 residues: Cardiolipin synthase A (486 aa).

Helical transmembrane passes span 3 to 23 (TFYT…IASV) and 38 to 58 (MAWL…YLSF). PLD phosphodiesterase domains follow at residues 219–246 (MDLR…VDPR) and 399–426 (EGGL…DMRS). Residues His-224, Lys-226, Asp-231, His-404, Lys-406, and Asp-411 contribute to the active site.

This sequence belongs to the phospholipase D family. Cardiolipin synthase subfamily. ClsA sub-subfamily.

It is found in the cell inner membrane. The catalysed reaction is 2 a 1,2-diacyl-sn-glycero-3-phospho-(1'-sn-glycerol) = a cardiolipin + glycerol. Its function is as follows. Catalyzes the reversible phosphatidyl group transfer from one phosphatidylglycerol molecule to another to form cardiolipin (CL) (diphosphatidylglycerol) and glycerol. This is Cardiolipin synthase A from Edwardsiella ictaluri (strain 93-146).